We begin with the raw amino-acid sequence, 210 residues long: N-(5'-phosphoribosyl)anthranilate isomerase (210 aa).

It belongs to the TrpF family.

The catalysed reaction is N-(5-phospho-beta-D-ribosyl)anthranilate = 1-(2-carboxyphenylamino)-1-deoxy-D-ribulose 5-phosphate. It functions in the pathway amino-acid biosynthesis; L-tryptophan biosynthesis; L-tryptophan from chorismate: step 3/5. This chain is N-(5'-phosphoribosyl)anthranilate isomerase, found in Staphylococcus aureus (strain bovine RF122 / ET3-1).